Here is a 1894-residue protein sequence, read N- to C-terminus: MAPEAGATLRAPRRLSWAALLLLAALLPVASSAAASVDHPLKPRHVKLLSTKMGLKVTWDPPKDATSRPVEHYNIAYGKSLKSLKYIKVNAETYSFLIEDVEPGVVYFVLLTAENHSGVSRPVYRAESPPGGEWIEIDGFPIKGPGPFNETVTEKEVPNKPLRVRVRSSDDRLSVAWKAPRLSGAKSPRRSRGFLLGYGESGRKMNYVPLTRDERTHEIKKLASESVYVVSLQSMNSQGRSQPVYRAALTKRKISEEDELDVPDDISVRVMSSQSVLVSWVDPVLEKQKKVVASRQYTVRYREKGELARWDYKQIANRRVLIENLIPDTVYEFAVRISQGERDGKWSTSVFQRTPESAPTTAPENLNVWPVNGKPTVVAASWDALPETEGKVKEYILSYAPALKPFGAKSLTYPGDTTSALVDGLQPGERYLFKIRATNRRGLGPHSKAFIVAMPTTSKADVEQNTEDNGKPEKPEPSSPSPRAPASSQHPSVPASPQGRNAKDLLLDLKNKILANGGAPRKPQLRAKKAEELDLQSTEITGEEELGSREDSPMSPSDTQDQKRTLRPPSRHGHSVVAPGRTAVRARMPALPRREGVDKPGFSLATQPRPGAPPSASASPAHHASTQGTSHRPSLPASLNDNDLVDSDEDERAVGSLHPKGAFAQPRPALSPSRQSPSSVLRDRSSVHPGAKPASPARRTPHSGAAEEDSSASAPPSRLSPPHGGSSRLLPTQPHLSSPLSKGGKDGEDAPATNSNAPSRSTMSSSVSSHLSSRTQVSEGAEASDGESHGDGDREDGGRQAEATAQTLRARPASGHFHLLRHKPFAANGRSPSRFSIGRGPRLQPSSSPQSTVPSRAHPRVPSHSDSHPKLSSGIHGDEEDEKPLPATVVNDHVPSSSRQPISRGWEDLRRSPQRGASLHRKEPIPENPKSTGADTHPQGKYSSLASKAQDVQQSTDADTEGHSPKAQPGSTDRHASPARPPAARSQQHPSVPRRMTPGRAPQQQPPPPVATSQHHPGPQSRDAGRSPSQPRLSLTQAGRPRPTSQGRSHSSSDPYTASSRGMLPTALQNQDEDAQGSYDDDSTEVEAQDVRAPAHAARAKEAAASLPKHQQVESPTGAGAGGDHRSQRGHAASPARPSRPGGPQSRARVPSRAAPGKSEPPSKRPLSSKSQQSVSAEDDEEEDAGFFKGGKEDLLSSSVPKWPSSSTPRGGKDADGSLAKEEREPAIALAPRGGSLAPVKRPLPPPPGSSPRASHVPSRLPPRSAATVSPVAGTHPWPQYTTRAPPGHFSTTPMLSLRQRMMHARFRNPLSRQPARPSYRQGYNGRPNVEGKVLPGSNGKPNGQRIINGPQGTKWVVDLDRGLVLNAEGRYLQDSHGNPLRIKLGGDGRTIVDLEGTPVVSPDGLPLFGQGRHGTPLANAQDKPILSLGGKPLVGLEVIKKTTHPPTTTMQPTTTTTPLPTTTTPRPTTATTRRTTTTRRTTTRRPTTTVRTTTRTTTTTTPTPTTPIPTCPPGTLERHDDDGNLIMSSNGIPECYAEEDEFSGLETDTAVPTEEAYVIYDEDYEFETSRPPTTTEPSTTATTPRVIPEEGAISSFPEEEFDLAGRKRFVAPYVTYLNKDPSAPCSLTDALDHFQVDSLDEIIPNDLKKSDLPPQHAPRNITVVAVEGCHSFVIVDWDKATPGDVVTGYLVYSASYEDFIRNKWSTQASSVTHLPIENLKPNTRYYFKVQAQNPHGYGPISPSVSFVTESDNPLLVVRPPGGEPIWIPFAFKHDPSYTDCHGRQYVKRTWYRKFVGVVLCNSLRYKIYLSDNLKDTFYSIGDSWGRGEDHCQFVDSHLDGRTGPQSYVEALPTIQGYYRQYRQEPVRFGNIGFGTPYYYVGWYECGVSIPGKW.

An N-terminal signal peptide occupies residues 1–32; it reads MAPEAGATLRAPRRLSWAALLLLAALLPVASS. Positions 39 to 131 constitute a Fibronectin type-III 1 domain; the sequence is HPLKPRHVKL…PVYRAESPPG (93 aa). An N-linked (GlcNAc...) asparagine glycan is attached at Asn149. Fibronectin type-III domains follow at residues 158-258, 262-357, and 362-457; these read PNKP…SEED, VPDD…TPES, and APEN…MPTT. 4 disordered regions span residues 455–500, 515–1271, 1311–1350, and 1444–1515; these read PTTS…PQGR, ANGG…TVSP, LSRQ…IING, and THPP…CPPG. A compositionally biased stretch (basic residues) spans 565-574; that stretch reads TLRPPSRHGH. The span at 614–625 shows a compositional bias: low complexity; sequence PSASASPAHHAS. A compositionally biased stretch (polar residues) spans 626 to 641; sequence TQGTSHRPSLPASLND. Composition is skewed to low complexity over residues 711 to 722 and 759 to 778; these read SASAPPSRLSPP and SRST…TQVS. Position 717 is a phosphoserine (Ser717). The span at 786-799 shows a compositional bias: basic and acidic residues; the sequence is GESHGDGDREDGGR. Polar residues-rich tracts occupy residues 941–957 and 1027–1060; these read KYSS…QSTD and SPSQ…TASS. Residues 1071–1088 are compositionally biased toward acidic residues; sequence QDEDAQGSYDDDSTEVEA. The segment covering 1166–1176 has biased composition (polar residues); the sequence is PLSSKSQQSVS. Residues 1197–1209 are compositionally biased toward low complexity; that stretch reads SSSVPKWPSSSTP. A compositionally biased stretch (basic and acidic residues) spans 1211 to 1226; the sequence is GGKDADGSLAKEEREP. Positions 1445–1504 are enriched in low complexity; it reads HPPTTTMQPTTTTTPLPTTTTPRPTTATTRRTTTTRRTTTRRPTTTVRTTTRTTTTTTPT. The region spanning 1658-1752 is the Fibronectin type-III 5 domain; sequence APRNITVVAV…PSVSFVTESD (95 aa). N-linked (GlcNAc...) asparagine glycosylation occurs at Asn1661.

As to expression, almost absent from healthy skin; especially in epidermal keratinocytes, skin fibroblasts or endothelial cells and is barely detectable in benign melanocytic naevi. Expressed in the stroma close to skin tumors, in the tumor cells themselves and in the epidermis of psoriasis.

Its subcellular location is the secreted. May be an activator of G protein signaling. The sequence is that of Fibronectin type III domain-containing protein 1 (FNDC1) from Homo sapiens (Human).